Consider the following 75-residue polypeptide: Large ribosomal subunit protein uL24c (75 aa).

It belongs to the universal ribosomal protein uL24 family. In terms of assembly, part of the 50S ribosomal subunit.

It localises to the plastid. The protein localises to the chloroplast. In terms of biological role, one of two assembly initiator proteins, it binds directly to the 5'-end of the 23S rRNA, where it nucleates assembly of the 50S subunit. The protein is Large ribosomal subunit protein uL24c (rpl24) of Cyanidioschyzon merolae (strain NIES-3377 / 10D) (Unicellular red alga).